The chain runs to 76 residues: uncharacterized protein (76 aa).

Residues Met1–Gly15 form the signal peptide.

This is an uncharacterized protein from Magallana gigas (Pacific oyster).